The sequence spans 123 residues: UPF0382 membrane protein YwdK (123 aa).

Transmembrane regions (helical) follow at residues 3–23 (VFII…AFGA), 49–69 (ALGL…GSVT), 71–91 (AGWL…ILSV), and 96–116 (ILGA…IMIV).

It belongs to the UPF0382 family.

Its subcellular location is the cell membrane. This Bacillus subtilis (strain 168) protein is UPF0382 membrane protein YwdK (ywdK).